The primary structure comprises 99 residues: Putative membrane protein insertion efficiency factor (99 aa).

Belongs to the UPF0161 family.

The protein localises to the cell membrane. In terms of biological role, could be involved in insertion of integral membrane proteins into the membrane. The polypeptide is Putative membrane protein insertion efficiency factor (Corynebacterium glutamicum (strain ATCC 13032 / DSM 20300 / JCM 1318 / BCRC 11384 / CCUG 27702 / LMG 3730 / NBRC 12168 / NCIMB 10025 / NRRL B-2784 / 534)).